The following is a 270-amino-acid chain: Protein MGF 110-1L (270 aa).

An N-terminal signal peptide occupies residues Met-1–Arg-26. Residues Met-1–Ile-146 form an A repeat. Residue Asn-75 is glycosylated (N-linked (GlcNAc...) asparagine; by host). 2 helical membrane passes run Trp-118–Ile-138 and Ile-146–Arg-166. The B repeat unit spans residues Val-147–Met-270.

This sequence belongs to the asfivirus MGF 110 family.

The protein localises to the membrane. Functionally, plays a role in virus cell tropism, and may be required for efficient virus replication in macrophages. The protein is Protein MGF 110-1L of Ornithodoros (relapsing fever ticks).